Here is a 328-residue protein sequence, read N- to C-terminus: NADH-cytochrome b5 reductase-like protein (328 aa).

The FAD-binding FR-type domain occupies 76–184 (DKWLEFKLQD…KGPVEKFKYS (109 aa)). Position 201 is a phosphothreonine (T201).

The protein belongs to the flavoprotein pyridine nucleotide cytochrome reductase family. FAD is required as a cofactor.

It localises to the mitochondrion. The catalysed reaction is 2 Fe(III)-[cytochrome b5] + NADH = 2 Fe(II)-[cytochrome b5] + NAD(+) + H(+). In terms of biological role, desaturation and elongation of fatty acids. The chain is NADH-cytochrome b5 reductase-like protein (CBR2) from Arabidopsis thaliana (Mouse-ear cress).